The sequence spans 432 residues: Tyrosine-protein phosphatase non-receptor type 1 (432 aa).

An N-acetylmethionine modification is found at M1. The region spanning 3–277 (MEKEFEQIDK…RFSYLAVIEG (275 aa)) is the Tyrosine-protein phosphatase domain. Y20 is subject to Phosphotyrosine. S50 bears the Phosphoserine; by PKB/AKT1, CLK1 and CLK2 mark. Y66 bears the Phosphotyrosine; by EGFR mark. Substrate is bound by residues D181 and 215 to 221 (CSAGIGR). Residue C215 is the Phosphocysteine intermediate of the active site. A Cysteine persulfide modification is found at C215. C215 is subject to S-nitrosocysteine; in reversibly inhibited form. Residues S242 and S243 each carry the phosphoserine; by CLK1 and CLK2 modification. Q262 is a substrate binding site. The interval 297-322 (EDLEPPPEHVPPPPRPPKRTLEPHNG) is disordered. A phosphoserine mark is found at S335, S362, and S364. A disordered region spans residues 350–402 (SRAPSIAVHSMSSMSQDTEVRKRMVGGGLQSAQASVPTEEELSPTEEEQKAHR). Residue T367 is modified to Phosphothreonine.

It belongs to the protein-tyrosine phosphatase family. Non-receptor class 1 subfamily. Interacts with EPHA3 (phosphorylated); dephosphorylates EPHA3 and may regulate its trafficking and function. Interacts with MET. Interacts with NCK1. Post-translationally, ser-50 is the major site of phosphorylation as compared to Ser-242 and Ser-243. Activated by phosphorylation at Ser-50. S-nitrosylation of Cys-215 inactivates the enzyme activity. In terms of processing, sulfhydration at Cys-215 following endoplasmic reticulum stress inactivates the enzyme activity, promoting EIF2AK3/PERK activity. As to expression, found in several tissues including central nervous system, liver and kidney. A high level of expression was found in the hippocampus.

The protein resides in the endoplasmic reticulum membrane. The catalysed reaction is O-phospho-L-tyrosyl-[protein] + H2O = L-tyrosyl-[protein] + phosphate. In terms of biological role, tyrosine-protein phosphatase which acts as a regulator of endoplasmic reticulum unfolded protein response. Mediates dephosphorylation of EIF2AK3/PERK; inactivating the protein kinase activity of EIF2AK3/PERK. May play an important role in CKII- and p60c-src-induced signal transduction cascades. May regulate the EFNA5-EPHA3 signaling pathway which modulates cell reorganization and cell-cell repulsion. May also regulate the hepatocyte growth factor receptor signaling pathway through dephosphorylation of MET. In Rattus norvegicus (Rat), this protein is Tyrosine-protein phosphatase non-receptor type 1 (Ptpn1).